Consider the following 161-residue polypeptide: Epoxidase gkaX (161 aa).

An N-terminal signal peptide occupies residues 1 to 18 (MSLSTSLRLLRLLPAISS). N-linked (GlcNAc...) asparagine glycosylation occurs at asparagine 45. Transmembrane regions (helical) follow at residues 59–79 (WQWI…LNLV), 92–112 (IWYV…KMAL), and 139–159 (WVRA…AAVS).

The protein belongs to the epoxidase xenD family.

Its subcellular location is the membrane. Its pathway is mycotoxin biosynthesis. Its function is as follows. Epoxidase; part of the gene cluster that mediates the biosynthesis of GKK1032, fungal natural products containing a macrocyclic para-cyclophane connected to a decahydrofluorene ring system that show potent antitumor activities. Within the pathway, gkaX functions synergistically with gkaB and gkaZ to form the cyclophane. The pathway begins with the PKS-NRPS gkaA which, with the help of the trans-enoyl reductase gkaC, synthesizes the polyketide-tyrosyl acyl thioester product which can be reductively off-loaded by the terminal reductase (R) domain in gkaA. The alpha/beta hydrolase gkaG is then required to catalyze the subsequent Knoevenagel condensation that affords the 3-pyrrolin-2-one ring, whereas the three proteins gkaB, gkaX and gkaZ then function synergistically to form the cyclophane. The chain is Epoxidase gkaX from Penicillium citrinum.